Reading from the N-terminus, the 315-residue chain is 4-carboxy-2-hydroxymuconate-6-semialdehyde dehydrogenase (315 aa).

The protein belongs to the Gfo/Idh/MocA family. As to quaternary structure, homodimer.

The enzyme catalyses 4-carboxy-2-hydroxymuconate semialdehyde hemiacetal + NADP(+) = 2-oxo-2H-pyran-4,6-dicarboxylate + NADPH + H(+). Its pathway is secondary metabolite metabolism; lignin degradation. With respect to regulation, inhibited by p-chloromercuribenzoate (10 mM), HgCl2 (10 mM), or 5,5-dithiobis(2-nitrobenzoate) (100 mM). In terms of biological role, involved in the degradation of protocatechuate (PCA) via the PCA 4,5-cleavage pathway. Catalyzes the oxidation of the hemiacetal form of 4-carboxy-2-hydroxymuconate-6-semialdehyde (CHMS) to produce 2-pyrone-4,6-dicarboxylate (PDC). LigC has 10-times-higher affinity to NADP than to NAD. This chain is 4-carboxy-2-hydroxymuconate-6-semialdehyde dehydrogenase (ligC), found in Sphingobium sp. (strain NBRC 103272 / SYK-6).